The chain runs to 474 residues: MSLELPGNYRLSRLKSIQIRNVQEIQNHSKFAINTTENLWKRDVQLKRAISEGTIRIFISLHVQSKKLPVYITETSGNANHIFYVDEKVTEKLQKYRHEEYFIVRTWCSSSSHAFKLHKEWKILRYDSNFRYIGNDPVFAVCHIRNGLLCEFNDGVYIYTTSQSSDIMRQTSFPKSASTYSIDRRKDGYTIQKITRILKLAECIDEMHIAKHEIRAHFQEEEFQQIRLMHKRMLLRDEKIDELAKLEHLWQKQINSITQMRTKFDKTKSWLSSKRNTLNKSKESLQKDEAEYVELANSLKTKVETNIEIRILMAHAIRMHVSHLSKIYPIQPSPGNHDEFTIRNLRLSFEPDKINNVEMAASIGFLAHLLQTLSKYLEKELAYPILCASSRSSILDTLTPDIPTRIFPLYPATRPIELFEHAIYLLNQDVNDFLETFGLPIDQSMDILRNFKKLLQFILSGQHLSFVQVTSTAP.

Positions 271–300 (LSSKRNTLNKSKESLQKDEAEYVELANSLK) form a coiled coil.

It belongs to the VPS38 family. Component of the vps34 PI3-kinase complex II composed of atg6, pik3, vps15 and vps38.

Its subcellular location is the cytoplasm. The protein resides in the golgi apparatus. The protein localises to the trans-Golgi network membrane. It is found in the endosome membrane. Functionally, involved in endosome-to-Golgi retrograde transport as part of the vps34 PI3-kinase complex II. Mediates the interaction between atg6 and the pik3-ppk19 core complex, leading to the recruitment of atg6 to the membrane. This Schizosaccharomyces pombe (strain 972 / ATCC 24843) (Fission yeast) protein is Vacuolar protein sorting-associated protein 38 (vps38).